Here is a 358-residue protein sequence, read N- to C-terminus: Biotin synthase (358 aa).

The Radical SAM core domain maps to 55–278 (NKVRIHILDN…VNPDSEIRIA (224 aa)). [4Fe-4S] cluster-binding residues include C70, C74, and C77. [2Fe-2S] cluster contacts are provided by C114, C146, C206, and R276.

It belongs to the radical SAM superfamily. Biotin synthase family. As to quaternary structure, homodimer. [4Fe-4S] cluster serves as cofactor. It depends on [2Fe-2S] cluster as a cofactor.

The enzyme catalyses (4R,5S)-dethiobiotin + (sulfur carrier)-SH + 2 reduced [2Fe-2S]-[ferredoxin] + 2 S-adenosyl-L-methionine = (sulfur carrier)-H + biotin + 2 5'-deoxyadenosine + 2 L-methionine + 2 oxidized [2Fe-2S]-[ferredoxin]. Its pathway is cofactor biosynthesis; biotin biosynthesis; biotin from 7,8-diaminononanoate: step 2/2. In terms of biological role, catalyzes the conversion of dethiobiotin (DTB) to biotin by the insertion of a sulfur atom into dethiobiotin via a radical-based mechanism. This Leptospira borgpetersenii serovar Hardjo-bovis (strain JB197) protein is Biotin synthase.